The chain runs to 329 residues: Elongation factor Ts (329 aa).

Residues 79–82 (TDFV) are involved in Mg(2+) ion dislocation from EF-Tu.

It belongs to the EF-Ts family.

The protein resides in the cytoplasm. Functionally, associates with the EF-Tu.GDP complex and induces the exchange of GDP to GTP. It remains bound to the aminoacyl-tRNA.EF-Tu.GTP complex up to the GTP hydrolysis stage on the ribosome. In Parabacteroides distasonis (strain ATCC 8503 / DSM 20701 / CIP 104284 / JCM 5825 / NCTC 11152), this protein is Elongation factor Ts.